The chain runs to 437 residues: ATP-dependent protease ATPase subunit HslU (437 aa).

ATP is bound by residues isoleucine 18, 60-65 (GVGKTE), aspartate 250, glutamate 315, and arginine 387.

It belongs to the ClpX chaperone family. HslU subfamily. A double ring-shaped homohexamer of HslV is capped on each side by a ring-shaped HslU homohexamer. The assembly of the HslU/HslV complex is dependent on binding of ATP.

Its subcellular location is the cytoplasm. ATPase subunit of a proteasome-like degradation complex; this subunit has chaperone activity. The binding of ATP and its subsequent hydrolysis by HslU are essential for unfolding of protein substrates subsequently hydrolyzed by HslV. HslU recognizes the N-terminal part of its protein substrates and unfolds these before they are guided to HslV for hydrolysis. In Dinoroseobacter shibae (strain DSM 16493 / NCIMB 14021 / DFL 12), this protein is ATP-dependent protease ATPase subunit HslU.